A 417-amino-acid chain; its full sequence is S-adenosylmethionine synthase (417 aa).

Histidine 16 lines the ATP pocket. Aspartate 18 is a binding site for Mg(2+). Glutamate 44 is a binding site for K(+). Positions 57 and 100 each coordinate L-methionine. A flexible loop region spans residues glutamine 100–serine 110. ATP is bound by residues aspartate 175–lysine 177, lysine 251–phenylalanine 252, aspartate 260, arginine 266–lysine 267, alanine 283, and lysine 287. An L-methionine-binding site is contributed by aspartate 260. Lysine 291 is an L-methionine binding site.

It belongs to the AdoMet synthase family. In terms of assembly, homotetramer; dimer of dimers. It depends on Mg(2+) as a cofactor. The cofactor is K(+).

Its subcellular location is the cytoplasm. The catalysed reaction is L-methionine + ATP + H2O = S-adenosyl-L-methionine + phosphate + diphosphate. Its pathway is amino-acid biosynthesis; S-adenosyl-L-methionine biosynthesis; S-adenosyl-L-methionine from L-methionine: step 1/1. Its function is as follows. Catalyzes the formation of S-adenosylmethionine (AdoMet) from methionine and ATP. The overall synthetic reaction is composed of two sequential steps, AdoMet formation and the subsequent tripolyphosphate hydrolysis which occurs prior to release of AdoMet from the enzyme. The protein is S-adenosylmethionine synthase of Picosynechococcus sp. (strain ATCC 27264 / PCC 7002 / PR-6) (Agmenellum quadruplicatum).